Here is a 429-residue protein sequence, read N- to C-terminus: Trigger factor (429 aa).

The region spanning 161 to 246 (GDRLSIDFKG…INEVALPKEP (86 aa)) is the PPIase FKBP-type domain.

The protein belongs to the FKBP-type PPIase family. Tig subfamily.

Its subcellular location is the cytoplasm. The catalysed reaction is [protein]-peptidylproline (omega=180) = [protein]-peptidylproline (omega=0). Its function is as follows. Involved in protein export. Acts as a chaperone by maintaining the newly synthesized protein in an open conformation. Functions as a peptidyl-prolyl cis-trans isomerase. This Ruthia magnifica subsp. Calyptogena magnifica protein is Trigger factor.